The sequence spans 113 residues: Carboxysome shell protein CcmK4 (113 aa).

One can recognise a BMC domain in the interval 5–91; sequence AIGSLETKGF…PHENVEAVFP (87 aa).

It belongs to the bacterial microcompartments protein family. CcmK subfamily. In terms of assembly, homohexamer. Interacts stably with CcmK3, probably forms heterohexamers with a 1:2 CcmK3:CcmK4 stoichiometry.

The protein localises to the carboxysome. One of the shell proteins of the carboxysome, a polyhedral inclusion where RuBisCO (ribulose bisphosphate carboxylase, rbcL-rbcS) is sequestered. Assembles into hexamers which make sheets that form the facets of the polyhedral carboxysome. The hexamer central pore probably regulates metabolite flux. Its function is as follows. A minor shell protein of the carboxysome, a polyhedral inclusion where RuBisCO (ribulose bisphosphate carboxylase, rbcL-rbcS) is sequestered. Hexamers form sheets that form the facets of the polyhedral carboxysome. The shell is 4.5 nm thick, as observed for CcmK proteins. In PCC 7942 there are several CcmK paralogs with presumably functional differences; replacing the central pore residues (34-37) with those of CcmK2 from this organism (Tyr-Glu-Lys-Ile) allows the bacterium to make carboxysomes, but the expression level is too low to know if the carboxysome is functional for CO(2) fixation. This subunit probably makes both homohexamers and heterohexamers with CcmK3. The CcmK3-CcmK4 heterohexmers have been suggested to cap other hexamers, perhaps to alter metabolite flux. This chain is Carboxysome shell protein CcmK4, found in Synechococcus elongatus (strain ATCC 33912 / PCC 7942 / FACHB-805) (Anacystis nidulans R2).